A 1373-amino-acid chain; its full sequence is Insulin-like growth factor 1 receptor (1373 aa).

The signal sequence occupies residues 1–30 (MKSGSGGGSPTSLWGLVFLSAALSLWPTSG). Cys33 and Cys52 form a disulfide bridge. 3 N-linked (GlcNAc...) asparagine glycosylation sites follow: Asn51, Asn102, and Asn135. 13 disulfides stabilise this stretch: Cys150/Cys178, Cys182/Cys205, Cys192/Cys211, Cys215/Cys224, Cys219/Cys230, Cys231/Cys239, Cys235/Cys248, Cys251/Cys260, Cys264/Cys276, Cys282/Cys303, Cys307/Cys321, Cys324/Cys328, and Cys332/Cys354. The N-linked (GlcNAc...) asparagine glycan is linked to Asn245. Residue Asn314 is glycosylated (N-linked (GlcNAc...) asparagine). Residues Asn418 and Asn439 are each glycosylated (N-linked (GlcNAc...) asparagine). Cys456 and Cys489 form a disulfide bridge. 4 Fibronectin type-III domains span residues 490–610 (ESDV…TNAS), 611–709 (VPSI…TEAE), 735–829 (RPER…TMPA), and 835–928 (IPGP…VPAK). Residues Asn535, Asn608, Asn623, Asn641, Asn748, Asn757, Asn765, Asn901, and Asn914 are each glycosylated (N-linked (GlcNAc...) asparagine). Topologically, residues 742-936 (DVMQVANTTM…AKTTYENFMH (195 aa)) are extracellular. The chain crosses the membrane as a helical span at residues 937 to 960 (LIIALPVAILLIVGGLVIMLYVFH). Residues 961-1373 (RKRNNSRLGN…ALPLPQSSTC (413 aa)) are Cytoplasmic-facing. An IRS1- and SHC1-binding motif is present at residues 978-981 (NPEY). At Tyr981 the chain carries Phosphotyrosine. The Protein kinase domain maps to 1000–1276 (ITMNRELGQG…SIKDEMEPSF (277 aa)). Residues 1006–1014 (LGQGSFGMV) and Lys1034 contribute to the ATP site. Asp1137 functions as the Proton acceptor in the catalytic mechanism. Residues Tyr1163, Tyr1167, and Tyr1168 each carry the phosphotyrosine; by autocatalysis modification. Residues Lys1170 and Lys1173 each participate in a glycyl lysine isopeptide (Lys-Gly) (interchain with G-Cter in ubiquitin) cross-link. A Phosphoserine; by GSK3-beta modification is found at Ser1280. The segment at 1283–1373 (YSEENKPPEP…ALPLPQSSTC (91 aa)) is disordered. At Ser1284 the chain carries Phosphoserine. The span at 1292–1305 (PEELEMELEMEPEN) shows a compositional bias: acidic residues. The segment covering 1306-1322 (MESVPLDPSASSASLPL) has biased composition (low complexity). A compositionally biased stretch (basic and acidic residues) spans 1323–1332 (PERHSGHKAE).

This sequence belongs to the protein kinase superfamily. Tyr protein kinase family. Insulin receptor subfamily. In terms of assembly, tetramer of 2 alpha and 2 beta chains linked by disulfide bonds. The alpha chains contribute to the formation of the ligand-binding domain, while the beta chain carries the kinase domain. Interacts with PIK3R1 and with the PTB/PID domains of IRS1 and SHC1 in vitro when autophosphorylated on tyrosine residues. Forms a hybrid receptor with INSR, the hybrid is a tetramer consisting of 1 alpha chain and 1 beta chain of INSR and 1 alpha chain and 1 beta chain of IGF1R. Interacts with ARRB1 and ARRB2. Interacts with GRB10. Interacts with RACK1. Interacts with SOCS1, SOCS2 and SOCS3. Interacts with 14-3-3 proteins. Interacts with NMD2. Interacts with MAP3K5. Interacts with STAT3. Found in a ternary complex with IGF1 and ITGAV:ITGB3 or ITGA6:ITGB4. Interacts (nascent precursor form) with ZFAND2B. In terms of processing, autophosphorylated on tyrosine residues in response to ligand binding. Autophosphorylation occurs in trans, i.e. one subunit of the dimeric receptor phosphorylates tyrosine residues on the other subunit. Autophosphorylation occurs in a sequential manner; Tyr-1167 is predominantly phosphorylated first, followed by phosphorylation of Tyr-1163 and Tyr-1168. While every single phosphorylation increases kinase activity, all three tyrosine residues in the kinase activation loop (Tyr-1163, Tyr-1167 and Tyr-1168) have to be phosphorylated for optimal activity. Can be autophosphorylated at additional tyrosine residues (in vitro). Autophosphorylated is followed by phosphorylation of juxtamembrane tyrosines and C-terminal serines. May also be phosphorylated at Tyr-1163 and Tyr-1168 by mTORC2. Phosphorylation of Tyr-981 is required for IRS1- and SHC1-binding. Phosphorylation of Ser-1280 by GSK-3beta restrains kinase activity and promotes cell surface expression, it requires a priming phosphorylation at Ser-1284. Dephosphorylated by PTPN1. Polyubiquitinated at Lys-1170 and Lys-1173 through both 'Lys-48' and 'Lys-29' linkages, promoting receptor endocytosis and subsequent degradation by the proteasome. Ubiquitination is facilitated by pre-existing phosphorylation. Post-translationally, sumoylated with SUMO1. In terms of processing, controlled by regulated intramembrane proteolysis (RIP). Undergoes metalloprotease-dependent constitutive ectodomain shedding to produce a membrane-anchored 52 kDa C-Terminal fragment which is further processed by presenilin gamma-secretase to yield an intracellular 50 kDa fragment.

It localises to the cell membrane. It catalyses the reaction L-tyrosyl-[protein] + ATP = O-phospho-L-tyrosyl-[protein] + ADP + H(+). Activated by autophosphorylation at Tyr-1163, Tyr-1167 and Tyr-1168 on the kinase activation loop; phosphorylation at all three tyrosine residues is required for optimal kinase activity. Inhibited by MSC1609119A-1, BMS-754807, PQIP, benzimidazole pyridinone, isoquinolinedione, bis-azaindole, 3-cyanoquinoline, 2,4-bis-arylamino-1,3-pyrimidine, pyrrolopyrimidine, pyrrole-5-carboxaldehyde, picropodophyllin (PPP), tyrphostin derivatives. While most inhibitors bind to the ATP binding pocket, MSC1609119A-1 functions as allosteric inhibitor and binds close to the DFG motif and the activation loop. In terms of biological role, receptor tyrosine kinase which mediates actions of insulin-like growth factor 1 (IGF1). Binds IGF1 with high affinity and IGF2 and insulin (INS) with a lower affinity. The activated IGF1R is involved in cell growth and survival control. IGF1R is crucial for tumor transformation and survival of malignant cell. Ligand binding activates the receptor kinase, leading to receptor autophosphorylation, and tyrosines phosphorylation of multiple substrates, that function as signaling adapter proteins including, the insulin-receptor substrates (IRS1/2), Shc and 14-3-3 proteins. Phosphorylation of IRSs proteins lead to the activation of two main signaling pathways: the PI3K-AKT/PKB pathway and the Ras-MAPK pathway. The result of activating the MAPK pathway is increased cellular proliferation, whereas activating the PI3K pathway inhibits apoptosis and stimulates protein synthesis. Phosphorylated IRS1 can activate the 85 kDa regulatory subunit of PI3K (PIK3R1), leading to activation of several downstream substrates, including protein AKT/PKB. AKT phosphorylation, in turn, enhances protein synthesis through mTOR activation and triggers the antiapoptotic effects of IGFIR through phosphorylation and inactivation of BAD. In parallel to PI3K-driven signaling, recruitment of Grb2/SOS by phosphorylated IRS1 or Shc leads to recruitment of Ras and activation of the ras-MAPK pathway. In addition to these two main signaling pathways IGF1R signals also through the Janus kinase/signal transducer and activator of transcription pathway (JAK/STAT). Phosphorylation of JAK proteins can lead to phosphorylation/activation of signal transducers and activators of transcription (STAT) proteins. In particular activation of STAT3, may be essential for the transforming activity of IGF1R. The JAK/STAT pathway activates gene transcription and may be responsible for the transforming activity. JNK kinases can also be activated by the IGF1R. IGF1 exerts inhibiting activities on JNK activation via phosphorylation and inhibition of MAP3K5/ASK1, which is able to directly associate with the IGF1R. When present in a hybrid receptor with INSR, binds IGF1. This is Insulin-like growth factor 1 receptor (Igf1r) from Mus musculus (Mouse).